The following is a 60-amino-acid chain: Large ribosomal subunit protein bL32 (60 aa).

A disordered region spans residues 1–60 (MAVQQVKKSRSKRDMRRSHDSLTNPTLSTDKSTGELHLRHHVSPNGFYKGRKVVDTKSED). Residues 7 to 16 (KKSRSKRDMR) show a composition bias toward basic residues. Over residues 22–31 (LTNPTLSTDK) the composition is skewed to polar residues.

The protein belongs to the bacterial ribosomal protein bL32 family.

The chain is Large ribosomal subunit protein bL32 from Francisella tularensis subsp. holarctica (strain LVS).